The primary structure comprises 314 residues: Glycerol-1-phosphate dehydrogenase [NAD(P)+] (314 aa).

NAD(+) is bound by residues 52–56 (GKPLD) and 74–77 (TSAS). Asp-79 is a binding site for substrate. NAD(+) is bound at residue Ser-83. Position 131 (Asp-131) interacts with substrate. Asp-131 and His-211 together coordinate Zn(2+). His-215 lines the substrate pocket. Residue His-231 participates in Zn(2+) binding.

The protein belongs to the glycerol-1-phosphate dehydrogenase family. It depends on Zn(2+) as a cofactor.

It is found in the cytoplasm. The catalysed reaction is sn-glycerol 1-phosphate + NAD(+) = dihydroxyacetone phosphate + NADH + H(+). The enzyme catalyses sn-glycerol 1-phosphate + NADP(+) = dihydroxyacetone phosphate + NADPH + H(+). It participates in membrane lipid metabolism; glycerophospholipid metabolism. In terms of biological role, catalyzes the NAD(P)H-dependent reduction of dihydroxyacetonephosphate (DHAP or glycerone phosphate) to glycerol 1-phosphate (G1P). The G1P thus generated is used as the glycerophosphate backbone of phospholipids in the cellular membranes of Archaea. The sequence is that of Glycerol-1-phosphate dehydrogenase [NAD(P)+] from Korarchaeum cryptofilum (strain OPF8).